Reading from the N-terminus, the 84-residue chain is Esculentin-1B (84 aa).

An N-terminal signal peptide occupies residues 1 to 22 (MFTLKKPLLLIVLLGMISLSLC). Positions 23–38 (EQERNADEEEGSEIKR) are excised as a propeptide. The cysteines at positions 78 and 84 are disulfide-linked.

It belongs to the frog skin active peptide (FSAP) family. Brevinin subfamily. Expressed by the skin glands.

The protein resides in the secreted. Shows antibacterial activity against representative Gram-negative and Gram-positive bacterial species, and hemolytic activity. The chain is Esculentin-1B from Pelophylax lessonae (Pool frog).